We begin with the raw amino-acid sequence, 912 residues long: Intercellular adhesion molecule 5 (912 aa).

Residues 1-29 (MPGPSPGLRALLGFWVALGLGILRLSAVA) form the signal peptide. The Extracellular segment spans residues 30-826 (QEPFWADLQP…RITVRVAGPW (797 aa)). 9 Ig-like C2-type domains span residues 47–127 (GGSL…PLPP), 132–232 (GENF…RLLA), 239–324 (DSQS…LLTL), 332–395 (GKLV…NGSA), 403–481 (PRLD…VTLT), 486–561 (PALD…VAVT), 566–645 (PSFE…NPLG), 659–734 (PQMD…TVGV), and 738–819 (PVVA…RRIT). A glycan (N-linked (GlcNAc...) (high mannose) asparagine) is linked at Asn-53. 2 cysteine pairs are disulfide-bonded: Cys-54–Cys-97 and Cys-58–Cys-101. N-linked (GlcNAc...) asparagine glycosylation occurs at Asn-134. Cys-139 and Cys-195 are joined by a disulfide. 2 positions are modified to phosphothreonine: Thr-179 and Thr-181. Residues Asn-192 and Asn-211 are each glycosylated (N-linked (GlcNAc...) asparagine). A disulfide bridge connects residues Cys-246 and Cys-297. Asn-311, Asn-366, and Asn-392 each carry an N-linked (GlcNAc...) asparagine glycan. An intrachain disulfide couples Cys-339 to Cys-378. 3 disulfides stabilise this stretch: Cys-410-Cys-465, Cys-493-Cys-546, and Cys-573-Cys-638. Residues Asn-576 and Asn-639 are each glycosylated (N-linked (GlcNAc...) asparagine). Cysteines 666 and 717 form a disulfide. The interval 678-708 (AAGPACARGRPSPRVRCSREGAPRPARPRVS) is disordered. Asn-756, Asn-787, and Asn-788 each carry an N-linked (GlcNAc...) asparagine glycan. Cys-761 and Cys-806 are disulfide-bonded. Residues 827–847 (LWIAVGGAVGGAVLLAAGAGL) traverse the membrane as a helical segment. Residues 848–912 (AFYVQSTACK…EVFAIQLTSA (65 aa)) lie on the Cytoplasmic side of the membrane. Residues 880–902 (GGAGSGAEGGPEAEDSAESPAGG) are disordered.

It belongs to the immunoglobulin superfamily. ICAM family. In terms of processing, glycosylation at Asn-53 is critical for functional folding. Expressed on neurons in the most rostral segment of the mammalian brain, the telencephalon.

The protein localises to the membrane. Functionally, ICAM proteins are ligands for the leukocyte adhesion protein LFA-1 (integrin alpha-L/beta-2). This Oryctolagus cuniculus (Rabbit) protein is Intercellular adhesion molecule 5 (ICAM5).